The primary structure comprises 366 residues: Polyprenyl transferase ausN (366 aa).

Transmembrane regions (helical) follow at residues 97–117 (VVGI…DLLL), 121–141 (LLLT…NDLI), 164–184 (LPTA…LFLF), 215–235 (LILV…GVEP), 239–259 (ILSS…IDLV), 287–307 (LAYS…LLGG), 308–328 (LRAP…WTFL), and 346–366 (SCLM…AVRV).

It belongs to the UbiA prenyltransferase family. The cofactor is Mg(2+).

It localises to the membrane. It carries out the reaction 3,5-dimethylorsellinate + (2E,6E)-farnesyl diphosphate = (3R)-3-farnesyl-6-hydroxy-2,3,5-trimethyl-4-oxocyclohexa-1,5-diene-1-carboxylate + diphosphate + H(+). It functions in the pathway secondary metabolite biosynthesis; terpenoid biosynthesis. Functionally, polyprenyl transferase; part of the gene cluster that mediates the biosynthesis of calidodehydroaustin, a fungal meroterpenoid. The first step of the pathway is the synthesis of 3,5-dimethylorsellinic acid by the polyketide synthase ausA. 3,5-dimethylorsellinic acid is then prenylated by the polyprenyl transferase ausN. Further epoxidation by the FAD-dependent monooxygenase ausM and cyclization by the probable terpene cyclase ausL lead to the formation of protoaustinoid A. Protoaustinoid A is then oxidized to spiro-lactone preaustinoid A3 by the combined action of the FAD-binding monooxygenases ausB and ausC, and the dioxygenase ausE. Acid-catalyzed keto-rearrangement and ring contraction of the tetraketide portion of preaustinoid A3 by ausJ lead to the formation of preaustinoid A4. The aldo-keto reductase ausK, with the help of ausH, is involved in the next step by transforming preaustinoid A4 into isoaustinone which is in turn hydroxylated by the P450 monooxygenase ausI to form austinolide. The cytochrome P450 monooxygenase ausG modifies austinolide to austinol. Austinol is further acetylated to austin by the O-acetyltransferase ausP, which spontaneously changes to dehydroaustin. The cytochrome P450 monooxygenase ausR then converts dehydroaustin is into 7-dehydrodehydroaustin. The hydroxylation catalyzed by ausR permits the O-acetyltransferase ausQ to add an additional acetyl group to the molecule, leading to the formation of acetoxydehydroaustin. The short chain dehydrogenase ausT catalyzes the reduction of the double bond present between carbon atoms 1 and 2 to convert 7-dehydrodehydroaustin into 1,2-dihydro-7-hydroxydehydroaustin. AusQ catalyzes not only an acetylation reaction but also the addition of the PKS ausV diketide product to 1,2-dihydro-7-hydroxydehydroaustin, forming precalidodehydroaustin. Finally, the iron/alpha-ketoglutarate-dependent dioxygenase converts precalidodehydroaustin into calidodehydroaustin. The sequence is that of Polyprenyl transferase ausN from Aspergillus calidoustus.